We begin with the raw amino-acid sequence, 231 residues long: Venom allergen 3 homolog (231 aa).

Residues 1–21 form the signal peptide; sequence MSSCMLFFTVIIAGVFMGTIA. 3 cysteine pairs are disulfide-bonded: cysteine 25–cysteine 40, cysteine 30–cysteine 124, and cysteine 51–cysteine 117. In terms of domain architecture, SCP spans 68–215; sequence VTLHNQLRRK…WNQQYLVCNY (148 aa). Asparagine 145 carries N-linked (GlcNAc...) asparagine glycosylation. Cysteine 196 and cysteine 213 are disulfide-bonded.

Belongs to the CRISP family. In terms of tissue distribution, expressed by the venom gland.

It localises to the secreted. The protein is Venom allergen 3 homolog of Dinoponera quadriceps (South American ant).